Here is a 599-residue protein sequence, read N- to C-terminus: Putative sensor histidine kinase NtrY-like (599 aa).

4 helical membrane-spanning segments follow: residues 17–37, 44–64, 85–105, and 285–305; these read ILIL…FYVI, FSTI…LGIL, IVIA…VFSV, and IMFI…GVLF. In terms of domain architecture, HAMP spans 307–361; sequence AQIVKPIKKLVTATDKVKDGDLTVQVPENEVDKDEIGTLYVAFNRMIKQLSRQQR. A Histidine kinase domain is found at 378-589; the sequence is KVAHEIKNPL…IIDIKFDLKE (212 aa). H381 is modified (phosphohistidine; by autocatalysis).

It localises to the cell membrane. It carries out the reaction ATP + protein L-histidine = ADP + protein N-phospho-L-histidine.. Its function is as follows. Member of the two-component regulatory system RT0603/RT0550. The sequence is that of Putative sensor histidine kinase NtrY-like from Rickettsia typhi (strain ATCC VR-144 / Wilmington).